The primary structure comprises 388 residues: Mannosyl-3-phosphoglycerate synthase (388 aa).

This sequence belongs to the glycosyltransferase 2 family.

It localises to the cytoplasm. It carries out the reaction (2R)-3-phosphoglycerate + GDP-alpha-D-mannose = 2-O-(alpha-D-mannosyl)-3-phosphoglycerate + GDP + H(+). Its pathway is carbohydrate biosynthesis; 2-(alpha-D-mannosyl)-D-glycerate biosynthesis; 2-(alpha-D-mannosyl)-D-glycerate from GDP-alpha-D-mannose (MPG route): step 1/2. Its function is as follows. Transfers a mannosyl group from GDP-mannose to phosphoglycerate to form mannosyl-3-phosphoglycerate (MPG). This Aeropyrum pernix (strain ATCC 700893 / DSM 11879 / JCM 9820 / NBRC 100138 / K1) protein is Mannosyl-3-phosphoglycerate synthase (mngA).